The following is a 232-amino-acid chain: Thiamine import ATP-binding protein ThiQ (232 aa).

Residues Leu-2 to Ile-230 form the ABC transporter domain. An ATP-binding site is contributed by Gly-32 to Ser-39.

Belongs to the ABC transporter superfamily. Thiamine importer (TC 3.A.1.19.1) family. As to quaternary structure, the complex is composed of two ATP-binding proteins (ThiQ), two transmembrane proteins (ThiP) and a solute-binding protein (ThiB).

It localises to the cell inner membrane. The enzyme catalyses thiamine(out) + ATP + H2O = thiamine(in) + ADP + phosphate + H(+). Functionally, part of the ABC transporter complex ThiBPQ involved in thiamine import. Responsible for energy coupling to the transport system. This Shigella sonnei (strain Ss046) protein is Thiamine import ATP-binding protein ThiQ.